We begin with the raw amino-acid sequence, 307 residues long: MNHATSELHDESAVSIVPETTRLQDLSALVKMGIVNSNTLTVFTGFWLALHFNGLSVMDNLDKLFFTIVGSALIMAGVCCLNNYIDRDIDPLMERTKNRPTVTGKYKPGFALAFGLVILLLGFVFLLLTTPMAVLISFIGAFTYVVLYTLWTKRKYTLNTVVGSISGAVPPLIGWAAIDPSLNHPIAWMLFLIMFIWQIPHFLALAMKRVDEYRNAGIPMLPVVQGFDITKRQIMIWTVCLLPLPFYMSGLGITFMVIATLLNIGWIALGLYGFRQQDDIKWSVKMFVYSLNYLTILFVSMIVVTFF.

8 helical membrane passes run 32–52 (MGIVNSNTLTVFTGFWLALHF), 65–85 (FFTIVGSALIMAGVCCLNNYI), 108–128 (PGFALAFGLVILLLGFVFLLL), 131–151 (PMAVLISFIGAFTYVVLYTLW), 158–178 (LNTVVGSISGAVPPLIGWAAI), 186–206 (IAWMLFLIMFIWQIPHFLALA), 251–271 (LGITFMVIATLLNIGWIALGL), and 287–307 (FVYSLNYLTILFVSMIVVTFF).

The protein belongs to the UbiA prenyltransferase family. Protoheme IX farnesyltransferase subfamily. In terms of assembly, interacts with CtaA.

It localises to the cell membrane. The catalysed reaction is heme b + (2E,6E)-farnesyl diphosphate + H2O = Fe(II)-heme o + diphosphate. It participates in porphyrin-containing compound metabolism; heme O biosynthesis; heme O from protoheme: step 1/1. Its function is as follows. Converts heme B (protoheme IX) to heme O by substitution of the vinyl group on carbon 2 of heme B porphyrin ring with a hydroxyethyl farnesyl side group. This chain is Protoheme IX farnesyltransferase, found in Bacillus mycoides (strain KBAB4) (Bacillus weihenstephanensis).